The sequence spans 545 residues: Luciferin 4-monooxygenase (545 aa).

Residues 543-545 (SKL) carry the Microbody targeting signal motif.

Belongs to the ATP-dependent AMP-binding enzyme family. Mg(2+) is required as a cofactor.

It is found in the peroxisome. The enzyme catalyses firefly D-luciferin + ATP + O2 = firefly oxyluciferin + hnu + AMP + CO2 + diphosphate. Its function is as follows. Produces green light with a wavelength of 562 nm. The polypeptide is Luciferin 4-monooxygenase (Photuris pensylvanica (Pennsylania firefly)).